The primary structure comprises 1647 residues: Transcription elongation factor SPT6 homolog (1647 aa).

The interval 1-209 (MARNAISDDE…SKKKKYRQGS (209 aa)) is disordered. The segment covering 7 to 20 (SDDEEDHELEDDDG) has biased composition (acidic residues). The segment covering 21-30 (EPVHGDPAEH) has biased composition (basic and acidic residues). The segment covering 31–67 (DENDDEEDDDDVGNEYENDGFIVNDEDEEEEEEEDEE) has biased composition (acidic residues). The span at 103 to 114 (KFKKRQYKRLKK) shows a compositional bias: basic residues. The span at 132–151 (DSRGGTRRSAEDKIKDRLFD) shows a compositional bias: basic and acidic residues. Over residues 152 to 191 (DVDVDDPPDDVGDEEDLVVEEDVVGSEDEMADFIVDEDDE) the composition is skewed to acidic residues. One can recognise an S1 motif domain in the interval 1103 to 1174 (GRIVQASVRR…QRYQVFLICK (72 aa)). Residues 1429-1647 (PMRSPADHGS…RKSDGGGGGW (219 aa)) form a disordered region. A run of 2 repeats spans residues 1443–1444 (GW) and 1452–1453 (GW). Positions 1443 to 1647 (GWGSSQSEGG…RKSDGGGGGW (205 aa)) are 12 X 2 AA repeats of [WG]-[GW] repeats. The span at 1462 to 1471 (SGRGGEYRNG) shows a compositional bias: gly residues. Positions 1496 to 1507 (RRDDMNSDRQDG) are enriched in basic and acidic residues. 6 tandem repeats follow at residues 1511 to 1512 (WG), 1522 to 1523 (GW), 1530 to 1531 (GW), 1547 to 1548 (GW), 1563 to 1564 (WG), and 1574 to 1575 (GW). 4 stretches are compositionally biased toward gly residues: residues 1519–1532 (ADGG…GGWG), 1539–1552 (KTGG…GSES), 1561–1579 (GSWG…GNDS), and 1588–1600 (GGFG…GGSD). 4 repeat units span residues 1601–1602 (WG), 1615–1616 (GW), 1630–1631 (GW), and 1646–1647 (GW).

The protein belongs to the SPT6 family. Interacts (via N-terminus) with IWS1. As to expression, expressed in shoot apical meristem, leaf primordia, vasculature of young leaves, inflorescence meristem, floral meristem, young floral organs, developing ovules and anthers.

The protein resides in the nucleus. Its function is as follows. Transcription elongation factor that enhances the transcription elongation by RNA polymerase II (RNAPII). Plays an important role in regulating embryo apical and basal patterning during early embryogenesis, partly through negative regulation of the transcription factors PHABULOSA and PHAVOLUTA. This is Transcription elongation factor SPT6 homolog from Arabidopsis thaliana (Mouse-ear cress).